The sequence spans 142 residues: Cytochrome c-type biogenesis protein CcmE (142 aa).

Residues 1–2 lie on the Cytoplasmic side of the membrane; sequence MK. A helical; Signal-anchor for type II membrane protein membrane pass occupies residues 3-23; sequence GKYLLGILVILGALGYMVFGG. The Periplasmic segment spans residues 24-142; that stretch reads LGRNLVYFLT…EVRKLIEEAQ (119 aa). 2 residues coordinate heme: histidine 118 and tyrosine 122.

Belongs to the CcmE/CycJ family.

It is found in the cell inner membrane. Heme chaperone required for the biogenesis of c-type cytochromes. Transiently binds heme delivered by CcmC and transfers the heme to apo-cytochromes in a process facilitated by CcmF and CcmH. The protein is Cytochrome c-type biogenesis protein CcmE of Thermus thermophilus (strain ATCC BAA-163 / DSM 7039 / HB27).